The sequence spans 103 residues: MQNQRIRIRLKGFDHRLIDQSTAEIVETAKRTGAQVRGPIPLPTRKERYTVLISPHVNKDARDQYELRTHKRLVDIVEPTEKTVDALMRLDLAAGVDVQISLG.

This sequence belongs to the universal ribosomal protein uS10 family. In terms of assembly, part of the 30S ribosomal subunit.

Its function is as follows. Involved in the binding of tRNA to the ribosomes. This is Small ribosomal subunit protein uS10 from Shewanella loihica (strain ATCC BAA-1088 / PV-4).